Consider the following 406-residue polypeptide: Peptidase T (406 aa).

His82 contacts Zn(2+). Asp84 is a catalytic residue. A Zn(2+)-binding site is contributed by Asp142. The Proton acceptor role is filled by Glu176. Zn(2+) is bound by residues Glu177, Asp199, and His381.

It belongs to the peptidase M20B family. It depends on Zn(2+) as a cofactor.

The protein resides in the cytoplasm. The enzyme catalyses Release of the N-terminal residue from a tripeptide.. Functionally, cleaves the N-terminal amino acid of tripeptides. The chain is Peptidase T from Streptococcus agalactiae serotype Ia (strain ATCC 27591 / A909 / CDC SS700).